The following is a 196-amino-acid chain: Phosphoheptose isomerase (196 aa).

One can recognise an SIS domain in the interval 36–195; it reads VIQAYKLGKK…EKELFGEKVD (160 aa). Residue 51–53 coordinates substrate; that stretch reads NGG. Residues H60 and E64 each coordinate Zn(2+). Substrate contacts are provided by residues E64, 93-94, 119-121, S124, and Q171; these read ND and STS. 2 residues coordinate Zn(2+): Q171 and H179.

The protein belongs to the SIS family. GmhA subfamily. Requires Zn(2+) as cofactor.

It localises to the cytoplasm. It catalyses the reaction 2 D-sedoheptulose 7-phosphate = D-glycero-alpha-D-manno-heptose 7-phosphate + D-glycero-beta-D-manno-heptose 7-phosphate. It functions in the pathway carbohydrate biosynthesis; D-glycero-D-manno-heptose 7-phosphate biosynthesis; D-glycero-alpha-D-manno-heptose 7-phosphate and D-glycero-beta-D-manno-heptose 7-phosphate from sedoheptulose 7-phosphate: step 1/1. In terms of biological role, catalyzes the isomerization of sedoheptulose 7-phosphate in D-glycero-D-manno-heptose 7-phosphate. The protein is Phosphoheptose isomerase of Clostridium acetobutylicum (strain ATCC 824 / DSM 792 / JCM 1419 / IAM 19013 / LMG 5710 / NBRC 13948 / NRRL B-527 / VKM B-1787 / 2291 / W).